Reading from the N-terminus, the 389-residue chain is Chorismate synthase (389 aa).

2 residues coordinate NADP(+): Arg41 and Arg47. FMN contacts are provided by residues 129–131 (RSS), 247–248 (NA), Gly291, 306–310 (KPIST), and Arg332.

It belongs to the chorismate synthase family. Homotetramer. FMNH2 is required as a cofactor.

It carries out the reaction 5-O-(1-carboxyvinyl)-3-phosphoshikimate = chorismate + phosphate. It functions in the pathway metabolic intermediate biosynthesis; chorismate biosynthesis; chorismate from D-erythrose 4-phosphate and phosphoenolpyruvate: step 7/7. Catalyzes the anti-1,4-elimination of the C-3 phosphate and the C-6 proR hydrogen from 5-enolpyruvylshikimate-3-phosphate (EPSP) to yield chorismate, which is the branch point compound that serves as the starting substrate for the three terminal pathways of aromatic amino acid biosynthesis. This reaction introduces a second double bond into the aromatic ring system. This Rubrobacter xylanophilus (strain DSM 9941 / JCM 11954 / NBRC 16129 / PRD-1) protein is Chorismate synthase.